Consider the following 143-residue polypeptide: Large ribosomal subunit protein uL13 (143 aa).

Belongs to the universal ribosomal protein uL13 family. In terms of assembly, part of the 50S ribosomal subunit.

In terms of biological role, this protein is one of the early assembly proteins of the 50S ribosomal subunit, although it is not seen to bind rRNA by itself. It is important during the early stages of 50S assembly. The chain is Large ribosomal subunit protein uL13 from Dichelobacter nodosus (strain VCS1703A).